A 393-amino-acid polypeptide reads, in one-letter code: Probable chromate transport protein (393 aa).

Helical transmembrane passes span 22 to 42 (YFLK…GYMH), 90 to 110 (ALVG…LGWA), 119 to 139 (WMQA…AISA), 146 to 166 (TVGT…TTIV), 201 to 221 (FIGL…TSLL), 231 to 251 (AGAF…GGVV), 261 to 281 (QFLD…ITTG), 282 to 302 (FIGF…AMFI), 327 to 347 (FVNG…VVLG), and 370 to 390 (LGKK…GVIF).

Belongs to the chromate ion transporter (CHR) (TC 2.A.51) family.

It is found in the cell membrane. May function in the active transport of chromate into the cell under sulfur-deficient conditions. The sequence is that of Probable chromate transport protein (srpC) from Synechococcus elongatus (strain ATCC 33912 / PCC 7942 / FACHB-805) (Anacystis nidulans R2).